Here is a 272-residue protein sequence, read N- to C-terminus: Soluble interferon gamma receptor OPG193 (272 aa).

A signal peptide spans 1–13 (MRYIIILAVLFIN). N-linked (GlcNAc...) asparagine; by host glycans are attached at residues Asn-42, Asn-150, and Asn-267.

It belongs to the type II cytokine receptor family. Homodimer. Interacts with host IFNG.

It localises to the secreted. Functionally, counteracts the antiviral effects of host IFN-gamma. Acts as a soluble IFN-gamma receptor and thus inhibits the interaction between host IFN-gamma and its receptor. This Bos taurus (Bovine) protein is Soluble interferon gamma receptor OPG193 (OPG193).